The sequence spans 280 residues: MIDDLFAGLPALEKGSVWLVGAGPGDPGLLTLHAANALRQADVIVHDALVNEDCLKLARPGAVLEFAGKRGGKPSPKQRDISLRLVELARAGNRVLRLKGGDPFVFGRGGEEALTLVEHQVPFRIVPGITAGIGGLAYAGIPVTHREVNHAVTFLTGHDSSGLVPDRINWQGIASGSPVIVMYMAMKHIGAITANLIAGGRSPDEPVAFVCNAATPQQAVLETTLARAEADVAAAGLEPPAIVVVGEVVRLRAALDWIGALDGRKLAADPFANRILRNPA.

Residues P24, 100–102 (GGD), 130–131 (TA), M184, A213, and A241 each bind S-adenosyl-L-homocysteine.

It belongs to the precorrin methyltransferase family. In terms of assembly, homodimer.

It catalyses the reaction uroporphyrinogen III + 2 S-adenosyl-L-methionine = precorrin-2 + 2 S-adenosyl-L-homocysteine + H(+). The enzyme catalyses uroporphyrinogen III + S-adenosyl-L-methionine = precorrin-1 + S-adenosyl-L-homocysteine + H(+). The catalysed reaction is precorrin-1 + S-adenosyl-L-methionine = precorrin-2 + S-adenosyl-L-homocysteine. It participates in cofactor biosynthesis; adenosylcobalamin biosynthesis; precorrin-2 from uroporphyrinogen III: step 1/1. Its pathway is porphyrin-containing compound metabolism; siroheme biosynthesis; precorrin-2 from uroporphyrinogen III: step 1/1. S-adenosylhomocysteine is an extremely powerful competitive inhibitor of the uroporphyrinogen III methylation. SUMT exhibits a substrate inhibition phenomenon at uroporphyrinogen III concentrations above 2 uM; this property might play a regulatory role in cobalamin biosynthesis. The enzyme activity is completely insensitive to feedback inhibition by cobalamin and corrinoid intermediates. Catalyzes the two successive C-2 and C-7 methylation reactions involved in the conversion of uroporphyrinogen III to precorrin-2 via the intermediate formation of precorrin-1. It is a step in the biosynthesis of both cobalamin (vitamin B12) and siroheme. Neither uroporphyrin III nor the chlorin (factor I) is a substrate of SUMT. This chain is Uroporphyrinogen-III C-methyltransferase, found in Sinorhizobium sp.